Consider the following 378-residue polypeptide: Uroporphyrinogen decarboxylase (378 aa).

Substrate-binding positions include 40 to 44, D90, Y167, S222, and H355; that span reads RQAGR.

This sequence belongs to the uroporphyrinogen decarboxylase family. Homodimer.

It localises to the cytoplasm. It catalyses the reaction uroporphyrinogen III + 4 H(+) = coproporphyrinogen III + 4 CO2. Its pathway is porphyrin-containing compound metabolism; protoporphyrin-IX biosynthesis; coproporphyrinogen-III from 5-aminolevulinate: step 4/4. Catalyzes the decarboxylation of four acetate groups of uroporphyrinogen-III to yield coproporphyrinogen-III. This is Uroporphyrinogen decarboxylase from Psychrobacter arcticus (strain DSM 17307 / VKM B-2377 / 273-4).